Here is a 383-residue protein sequence, read N- to C-terminus: Putative protein FAM157A (383 aa).

Disordered stretches follow at residues 1–21 and 177–254; these read MGPL…PLPK and ATAR…PLGR.

Belongs to the FAM157 family.

This Homo sapiens (Human) protein is Putative protein FAM157A (FAM157A).